The following is a 516-amino-acid chain: Importin subunit alpha-B (516 aa).

Positions 1–29 (MQRSKQETRKSQYKKSIDSDESRRKREEA) are enriched in basic and acidic residues. The disordered stretch occupies residues 1–54 (MQRSKQETRKSQYKKSIDSDESRRKREEASLSIRKNKREESLLKKRTQAVPGST). The IBB domain maps to 1–55 (MQRSKQETRKSQYKKSIDSDESRRKREEASLSIRKNKREESLLKKRTQAVPGSTP). ARM repeat units follow at residues 55–96 (PVKV…KLLS), 100–140 (SPPI…NIAS), 143–182 (PEQT…NIAG), 185–227 (HYCR…NFCR), 229–268 (KPQP…YLSD), 271–310 (NERI…NIVT), 313–352 (DNQT…NITA), 355–394 (KNQI…NATS), and 398–437 (PQQI…NILV). Residues 490–516 (EQEDEGDLMPEGSSFSFSNQTNSNFNL) form a disordered region. Positions 502-516 (SSFSFSNQTNSNFNL) are enriched in low complexity.

Belongs to the importin alpha family. Forms a complex with tnpo/importin subunit beta.

Its subcellular location is the cytoplasm. It localises to the nucleus envelope. In terms of biological role, functions in nuclear protein import via a substrate-importin alpha-beta transport complex that passes though the nuclear pore complexes (NPC). Binds specifically and directly to substrates containing either a simple or bipartite NLS motif. This Dictyostelium discoideum (Social amoeba) protein is Importin subunit alpha-B.